The chain runs to 322 residues: Ribosomal RNA large subunit methyltransferase F (322 aa).

The protein belongs to the methyltransferase superfamily. METTL16/RlmF family.

The protein resides in the cytoplasm. It catalyses the reaction adenosine(1618) in 23S rRNA + S-adenosyl-L-methionine = N(6)-methyladenosine(1618) in 23S rRNA + S-adenosyl-L-homocysteine + H(+). Specifically methylates the adenine in position 1618 of 23S rRNA. This is Ribosomal RNA large subunit methyltransferase F from Cytophaga hutchinsonii (strain ATCC 33406 / DSM 1761 / CIP 103989 / NBRC 15051 / NCIMB 9469 / D465).